Consider the following 394-residue polypeptide: S-adenosylmethionine synthase (394 aa).

His-15 contacts ATP. Asp-17 contributes to the Mg(2+) binding site. Glu-43 contributes to the K(+) binding site. L-methionine-binding residues include Glu-56 and Gln-99. The interval 99 to 109 (QSPDIALGVNK) is flexible loop. ATP-binding positions include 173–175 (DGK), 239–240 (RF), Asp-248, 254–255 (RK), Ala-271, and Lys-275. Asp-248 contributes to the L-methionine binding site. Lys-279 is an L-methionine binding site.

This sequence belongs to the AdoMet synthase family. As to quaternary structure, homotetramer; dimer of dimers. It depends on Mg(2+) as a cofactor. The cofactor is K(+).

It is found in the cytoplasm. It catalyses the reaction L-methionine + ATP + H2O = S-adenosyl-L-methionine + phosphate + diphosphate. It functions in the pathway amino-acid biosynthesis; S-adenosyl-L-methionine biosynthesis; S-adenosyl-L-methionine from L-methionine: step 1/1. Functionally, catalyzes the formation of S-adenosylmethionine (AdoMet) from methionine and ATP. The overall synthetic reaction is composed of two sequential steps, AdoMet formation and the subsequent tripolyphosphate hydrolysis which occurs prior to release of AdoMet from the enzyme. In Kosmotoga olearia (strain ATCC BAA-1733 / DSM 21960 / TBF 19.5.1), this protein is S-adenosylmethionine synthase.